Here is a 144-residue protein sequence, read N- to C-terminus: uncharacterized protein (144 aa).

The segment covering 124–133 (KALNRKKSKT) has biased composition (basic residues). The interval 124 to 144 (KALNRKKSKTKNGEKNGEGKS) is disordered. Basic and acidic residues predominate over residues 134–144 (KNGEKNGEGKS).

This is an uncharacterized protein from Acidianus filamentous virus 1 (isolate United States/Yellowstone) (AFV-1).